We begin with the raw amino-acid sequence, 332 residues long: Multiple virulence factor regulator MvfR (332 aa).

Residues 4–61 (HNLNHVNMFLQVIASGSISSAARILRKSHTAVSSAVSNLEIDLCVELVRRDGYKVEPT) form the HTH lysR-type domain. A DNA-binding region (H-T-H motif) is located at residues 21 to 40 (ISSAARILRKSHTAVSSAVS).

Belongs to the LysR transcriptional regulatory family. Forms homooligomers.

It localises to the cell inner membrane. The protein localises to the secreted. With respect to regulation, both 3,4-dihydroxy-2-heptylquinoline (PQS) and its precursor 4-hydroxy-2-heptylquinoline (HHQ) function as ligands and promote MvfR DNA-binding activity leading to transcriptional activation. Its function is as follows. Transcription regulator that plays a critical role in virulence by positively regulating the expression of multiple quorum sensing (QS)-regulated virulence factors, genes involved in protein secretion, translation, response to oxidative stress and the phnAB operon. At the stationary phase, negatively autoregulates its function through cleavage and translocation to the extracellular space. The chain is Multiple virulence factor regulator MvfR from Pseudomonas aeruginosa (strain ATCC 15692 / DSM 22644 / CIP 104116 / JCM 14847 / LMG 12228 / 1C / PRS 101 / PAO1).